A 483-amino-acid chain; its full sequence is Regulatory protein ViaA (483 aa).

It belongs to the ViaA family. Homodimer. Interacts with RavA.

Its subcellular location is the cytoplasm. Component of the RavA-ViaA chaperone complex, which may act on the membrane to optimize the function of some of the respiratory chains. ViaA stimulates the ATPase activity of RavA. In Salmonella typhi, this protein is Regulatory protein ViaA.